The sequence spans 459 residues: MAEEKKEELFTSIGNAAQNVSTAEDREGNGVQEVESLCMECGKNGTTKLLLTVIPYFREVVLMSFECPHCGFKNAQVQHAETIQPEGSKITFHVEDKEDLNRTVVKSQEAIVSIPEIQLEIPGRLGQLTTIEGILSNVVDDLSKEQESRKESAPQLYDQINAFIEKVNSLRSGSVPFTITVDDITGNSWIEMKPGRDGDRWSQVSYKRTLEQNTKLGLVDTDQPEDVKTQTNNASNTLKHDATAVEVDPNEVHTFHATCPSCSHQCDTHMKLLDIPHFKEVIIMSTVCDRCGYRSNEVKTGGEIPPKGRKITLKVMDAEDLSRDILKSETASLKIPELGLDLFPGTLGGRFTTIEGLLAQVYDELYGRVFSQETDSMTPEQVANWQQFLCNLTAAREGATQFTLILDDPLSQSYLQNYYAPDPDPNMTIEEYERSFQVNEELGLNDMKTENYEKDGGKK.

2 consecutive C4-type zinc fingers follow at residues 38–70 and 259–291; these read CMEC…CPHC and CPSC…CDRC.

It belongs to the ZPR1 family.

The protein resides in the cytoplasm. It localises to the nucleus. Acts as a protein folding chaperone for elongation factor 1-alpha. The protein is Zinc finger chaperone zpr1 of Schizosaccharomyces pombe (strain 972 / ATCC 24843) (Fission yeast).